Reading from the N-terminus, the 274-residue chain is F-actin-capping protein subunit alpha (274 aa).

This sequence belongs to the F-actin-capping protein alpha subunit family. Heterodimer of an alpha and a beta subunit.

The protein localises to the cytoplasm. In terms of biological role, F-actin-capping proteins bind in a Ca(2+)-independent manner to the fast growing ends of actin filaments (barbed end) thereby blocking the exchange of subunits at these ends. Unlike other capping proteins (such as gelsolin and severin), these proteins do not sever actin filaments. This is F-actin-capping protein subunit alpha from Chaetomium thermophilum (strain DSM 1495 / CBS 144.50 / IMI 039719) (Thermochaetoides thermophila).